Here is a 760-residue protein sequence, read N- to C-terminus: Serine/threonine-protein kinase Haspin homolog ALK1 (760 aa).

Residues Ser-76 and Ser-79 each carry the phosphoserine modification. Disordered stretches follow at residues 76–100, 123–153, 187–264, and 362–408; these read SDAS…KKRW, SSFT…SSLD, DDIS…STVS, and KRNS…CSYS. Residues 78–95 are compositionally biased toward polar residues; the sequence is ASLNVTTGNNTSRKTTSN. The KEN box signature appears at 200 to 202; the sequence is KEN. Over residues 209–220 the composition is skewed to polar residues; it reads KKNSSIASTSSE. Residues 224-232 carry the D box motif; sequence RTPLKPLVN. The span at 237–250 shows a compositional bias: polar residues; the sequence is PTSQPQQQQPLYNA. The segment covering 251 to 264 has biased composition (low complexity); sequence SLSSRRSSISSTVS. The segment covering 362–386 has biased composition (basic residues); the sequence is KRNSQSSLKHKSSHASLQKFKRNKG. Low complexity predominate over residues 398–408; it reads NSSNDDSCSYS. The Protein kinase domain occupies 468-760; sequence NCDIKRILNP…NTGDLLKLYK (293 aa). ATP is bound by residues 474–482 and Lys-510; that span reads ILNPAKGDV.

The protein belongs to the protein kinase superfamily. Ser/Thr protein kinase family. Haspin subfamily. Post-translationally, periodically phosphorylated during the cell cycle with a phosphorylation peak during mitosis and hyperphosphorylated after DNA damage.

The catalysed reaction is L-seryl-[protein] + ATP = O-phospho-L-seryl-[protein] + ADP + H(+). The enzyme catalyses L-threonyl-[protein] + ATP = O-phospho-L-threonyl-[protein] + ADP + H(+). Its function is as follows. Serine/threonine haspin-like protein kinase involved in cell cycle regulation. This is Serine/threonine-protein kinase Haspin homolog ALK1 (ALK1) from Saccharomyces cerevisiae (strain ATCC 204508 / S288c) (Baker's yeast).